A 308-amino-acid chain; its full sequence is Apolipoprotein F (308 aa).

It belongs to the apolipoprotein F family.

The protein resides in the secreted. Minor apolipoprotein that associates with LDL. Inhibits cholesteryl ester transfer protein (CETP) activity and appears to be an important regulator of cholesterol transport. Also associates to a lesser degree with VLDL, Apo-AI and Apo-AII. The protein is Apolipoprotein F (Apof) of Rattus norvegicus (Rat).